The sequence spans 784 residues: Ent-kaurene synthase 1, chloroplastic (784 aa).

The transit peptide at 1-28 (MNLSLCIASPLLTKSSRPTALSAIHTAS) directs the protein to the chloroplast. Residues Asp528, Asp532, Asn672, and Glu680 each contribute to the Mg(2+) site. The DDXXD motif motif lies at 528 to 532 (DDFFD).

The protein belongs to the terpene synthase family. Mg(2+) serves as cofactor. As to expression, accumulates in leaves.

It is found in the plastid. The protein resides in the chloroplast. It carries out the reaction ent-copalyl diphosphate = ent-kaur-16-ene + diphosphate. It functions in the pathway secondary metabolite biosynthesis; terpenoid biosynthesis. The protein operates within plant hormone biosynthesis; gibberellin biosynthesis. In terms of biological role, involved in the biosynthesis of ent-kaurene diterpenoids natural products such as oridonin, miltiradiene, eriocalyxin B and nezukol, known to exhibit antitumor, anti-inflammatory and antibacterial activities, and in the production of gibberellins phytohormones. Catalyzes the conversion of ent-copalyl diphosphate (ent-CPP) to ent-kaurene. This is Ent-kaurene synthase 1, chloroplastic from Stevia rebaudiana (Stevia).